Reading from the N-terminus, the 607-residue chain is UvrABC system protein C (607 aa).

A GIY-YIG domain is found at 16-94; it reads GRPGVYRMFD…IKEWRPPYNI (79 aa). Residues 203–238 enclose the UVR domain; the sequence is QQLGNELNAEMEKAAMALDFEKAAELRDQIALLRRV.

It belongs to the UvrC family. As to quaternary structure, interacts with UvrB in an incision complex.

The protein resides in the cytoplasm. Its function is as follows. The UvrABC repair system catalyzes the recognition and processing of DNA lesions. UvrC both incises the 5' and 3' sides of the lesion. The N-terminal half is responsible for the 3' incision and the C-terminal half is responsible for the 5' incision. This chain is UvrABC system protein C, found in Pseudomonas putida (strain ATCC 47054 / DSM 6125 / CFBP 8728 / NCIMB 11950 / KT2440).